A 342-amino-acid chain; its full sequence is MSVHPTQTLSLSQYLIEEQLKLPQATGDFTALMSHLVYAAKIVSREVRKAGLLENILGATETVNVQGETQMKLDEYADKVFNHTLTRSGHLCILGSEEHEETVPVPNGYKIGKYTIAIDPLDGSSNIDANVSIGTIFSVHLRKSPAGTPGTLSDLLQQGSGQRAAGYVLYGSSTMLILCTGKGVSGFTLDPSCGEFILSHPDMQIPETGGIYSINEGNYNYWSDEVKNYIRDIKSIEGGRKPQSGRYIGSLVADFHRNLLKGGIFLYPNDTKSTKYPNGKLRLLYEAAPMAFIAEQAGGMAVTVYGERILDLTPKELHERTTLVVGSKKEVEHFLKFAPKKS.

Mg(2+)-binding residues include glutamate 97, aspartate 119, leucine 121, and aspartate 122. Substrate contacts are provided by residues 122–125 (DGSS), asparagine 215, tyrosine 247, and lysine 280. Glutamate 286 serves as a coordination point for Mg(2+).

The protein belongs to the FBPase class 1 family. Homotetramer. Requires Mg(2+) as cofactor.

It localises to the cytoplasm. It catalyses the reaction beta-D-fructose 1,6-bisphosphate + H2O = beta-D-fructose 6-phosphate + phosphate. Its pathway is carbohydrate biosynthesis; gluconeogenesis. This is Fructose-1,6-bisphosphatase class 1 from Leptospira interrogans serogroup Icterohaemorrhagiae serovar copenhageni (strain Fiocruz L1-130).